The primary structure comprises 213 residues: Membrane-spanning 4-domains subfamily A member 3 (213 aa).

The Cytoplasmic portion of the chain corresponds to 1–26 (MKPEETGGSVYQPLDESRHVQRGVLQ). Residues 27 to 47 (ALGAIQILNGILILALGIFLV) traverse the membrane as a helical segment. Residues 48-58 (CLQHVSHHFRH) are Extracellular-facing. Residues 59-79 (FFFFTFYTGYPLWGAVFFISS) form a helical membrane-spanning segment. Residues 80 to 97 (GSLTVAAGRNPTRMLMQN) lie on the Cytoplasmic side of the membrane. Residues 98–118 (SFGINIASTTIAFVGTVFLSV) form a helical membrane-spanning segment. Over 119–148 (HLAFNTQAFKGCQSSPSPDVCISLGSSSDG) the chain is Extracellular. The chain crosses the membrane as a helical span at residues 149–169 (LVSLMLILTLLELSVTISISA). Topologically, residues 170-213 (MWCLGNVCGLREAITSPPNSVESGILPEGSDSENLNTQPQASEE) are cytoplasmic. The interval 189-213 (SVESGILPEGSDSENLNTQPQASEE) is disordered. The span at 201 to 213 (SENLNTQPQASEE) shows a compositional bias: polar residues.

Belongs to the MS4A family. Interacts with CDKN3. Interacts with CDKN3-CDK2 complexes through its binding to CDKN3; this interaction facilitates dissociation of cyclin A from CDKN3-CDK2 complexes. As to expression, expressed at low levels only in specific immune tissues, such as, spleen, bone marrow and peripheral blood leukocytes.

Its subcellular location is the membrane. In terms of biological role, hematopoietic modulator for the G1-S cell cycle transition. Modulates the level of phosphorylation of cyclin-dependent kinase 2 (CDK2) through its direct binding to cyclin-dependent kinase inhibitor 3 (CDKN3/KAP). In Mus musculus (Mouse), this protein is Membrane-spanning 4-domains subfamily A member 3 (Ms4a3).